We begin with the raw amino-acid sequence, 498 residues long: ATP synthase subunit beta, chloroplastic (498 aa).

A Phosphothreonine modification is found at T6. A Phosphoserine modification is found at S13. An ATP-binding site is contributed by 172–179 (GGAGVGKT).

This sequence belongs to the ATPase alpha/beta chains family. F-type ATPases have 2 components, CF(1) - the catalytic core - and CF(0) - the membrane proton channel. CF(1) has five subunits: alpha(3), beta(3), gamma(1), delta(1), epsilon(1). CF(0) has four main subunits: a(1), b(1), b'(1) and c(9-12).

The protein resides in the plastid. It is found in the chloroplast thylakoid membrane. It catalyses the reaction ATP + H2O + 4 H(+)(in) = ADP + phosphate + 5 H(+)(out). Functionally, produces ATP from ADP in the presence of a proton gradient across the membrane. The catalytic sites are hosted primarily by the beta subunits. The polypeptide is ATP synthase subunit beta, chloroplastic (Draba nemorosa (Woodland whitlowgrass)).